A 575-amino-acid polypeptide reads, in one-letter code: Reverse gyrse subunit B (575 aa).

An RG N-terminal-type; degenerate zinc finger spans residues Met1 to Glu39. ATP contacts are provided by residues Gln83 and Ala100–Thr107. A Helicase ATP-binding domain is found at Phe87 to Glu247. The short motif at Asp204–Asp207 is the DEAD box element. In terms of domain architecture, Helicase C-terminal spans Gln316–Glu465.

It belongs to the DEAD box helicase family. DDVD subfamily. Heterodimer of an RgyA and RgyB subunit.

The protein localises to the cytoplasm. It carries out the reaction ATP + H2O = ADP + phosphate + H(+). Its function is as follows. Modifies the topological state of DNA by introducing positive supercoils in an ATP-dependent process. Binds to single-stranded DNA, transiently cleaves and then rejoins the end, introducing a positive supercoil in the process. The scissile phosphodiester is attacked by the catalytic tyrosine of the enzyme, resulting in the formation of a DNA-(5'-phosphotyrosyl)-enzyme intermediate. Probably involved in rewinding DNA strands in regions of the chromosome that have opened up to allow replication, transcription, DNA repair or for DNA protection. Reconstituted holoenzyme binds dsDNA a bit better than ssDNA, this subunit preferentially binds dsDNA. In isolation this subunit has DNA-stimulated ATPase activity that is stimulated by topoisomerase-domain containing RgyA. This subunit inhibits the relaxation activity of the topoisomerase subunit while promoting positive supercoiling. The protein is Reverse gyrse subunit B of Nanoarchaeum equitans (strain Kin4-M).